The primary structure comprises 546 residues: Chaperonin GroEL 2 (546 aa).

Residues 30-33 (TLGP), K51, 87-91 (DGTTT), G415, 479-481 (NAA), and D495 each bind ATP. A disordered region spans residues 524–546 (APKDAPPAQPAGVPGAGGTGFDF). Over residues 537 to 546 (PGAGGTGFDF) the composition is skewed to gly residues.

It belongs to the chaperonin (HSP60) family. In terms of assembly, forms a cylinder of 14 subunits composed of two heptameric rings stacked back-to-back. Interacts with the co-chaperonin GroES.

The protein resides in the cytoplasm. The enzyme catalyses ATP + H2O + a folded polypeptide = ADP + phosphate + an unfolded polypeptide.. In terms of biological role, together with its co-chaperonin GroES, plays an essential role in assisting protein folding. The GroEL-GroES system forms a nano-cage that allows encapsulation of the non-native substrate proteins and provides a physical environment optimized to promote and accelerate protein folding. The polypeptide is Chaperonin GroEL 2 (Burkholderia thailandensis (strain ATCC 700388 / DSM 13276 / CCUG 48851 / CIP 106301 / E264)).